The primary structure comprises 226 residues: Ribosomal RNA small subunit methyltransferase G (226 aa).

Residues glycine 95, leucine 100, 146 to 147 (VE), and arginine 159 contribute to the S-adenosyl-L-methionine site.

It belongs to the methyltransferase superfamily. RNA methyltransferase RsmG family.

The protein localises to the cytoplasm. The catalysed reaction is guanosine(527) in 16S rRNA + S-adenosyl-L-methionine = N(7)-methylguanosine(527) in 16S rRNA + S-adenosyl-L-homocysteine. Specifically methylates the N7 position of guanine in position 527 of 16S rRNA. This Acidovorax ebreus (strain TPSY) (Diaphorobacter sp. (strain TPSY)) protein is Ribosomal RNA small subunit methyltransferase G.